Consider the following 721-residue polypeptide: Long-chain-fatty-acid--CoA ligase ACSBG1 (721 aa).

The interval 1-64 (MPRSSEAGYC…SHGLELSAPE (64 aa)) is disordered. Positions 26–43 (QQGASMGTSPDNSQTSSL) are enriched in polar residues. Phosphoserine is present on residues serine 34, serine 50, serine 53, and serine 70. Residues 279-287 (TSGTTGNPK), 469-474 (AGYGLS), aspartate 547, and arginine 562 each bind ATP. Tyrosine 655 carries the phosphotyrosine modification. Position 698 (lysine 698) interacts with ATP.

Belongs to the ATP-dependent AMP-binding enzyme family. Bubblegum subfamily. Present in testis, at a lower level in brain, and at a very low level in ovary. Not detected in other tissues. tested. Present in Leydig cells of the adult testis and to a lesser degree in the seminiferous tubules in spermatogonia and Sertoli cells (at protein level).

The protein localises to the cytoplasm. Its subcellular location is the cytoplasmic vesicle. It localises to the microsome. It is found in the endoplasmic reticulum. The protein resides in the cell membrane. It carries out the reaction a long-chain fatty acid + ATP + CoA = a long-chain fatty acyl-CoA + AMP + diphosphate. The catalysed reaction is (E)-hexadec-2-enoate + ATP + CoA = (2E)-hexadecenoyl-CoA + AMP + diphosphate. The enzyme catalyses hexadecanoate + ATP + CoA = hexadecanoyl-CoA + AMP + diphosphate. Its function is as follows. Catalyzes the conversion of fatty acids such as long-chain and very long-chain fatty acids to their active form acyl-CoAs for both synthesis of cellular lipids, and degradation via beta-oxidation. Can activate diverse saturated, monosaturated and polyunsaturated fatty acids. This Rattus norvegicus (Rat) protein is Long-chain-fatty-acid--CoA ligase ACSBG1.